We begin with the raw amino-acid sequence, 75 residues long: UPF0270 protein Pfl01_4103 (75 aa).

Belongs to the UPF0270 family.

The protein is UPF0270 protein Pfl01_4103 of Pseudomonas fluorescens (strain Pf0-1).